The chain runs to 294 residues: Protoheme IX farnesyltransferase (294 aa).

9 helical membrane-spanning segments follow: residues 24–44, 48–68, 96–116, 118–138, 145–165, 172–192, 211–231, 241–263, and 268–288; these read VVLL…PGWV, LIAF…AINH, ALWF…LFVN, LTAL…TGYL, NIVI…TAVT, ALLL…ALAI, GIQF…VVSL, WIYL…KLYF, and VVAM…FVFL.

This sequence belongs to the UbiA prenyltransferase family. Protoheme IX farnesyltransferase subfamily.

The protein localises to the cell inner membrane. It carries out the reaction heme b + (2E,6E)-farnesyl diphosphate + H2O = Fe(II)-heme o + diphosphate. It functions in the pathway porphyrin-containing compound metabolism; heme O biosynthesis; heme O from protoheme: step 1/1. In terms of biological role, converts heme B (protoheme IX) to heme O by substitution of the vinyl group on carbon 2 of heme B porphyrin ring with a hydroxyethyl farnesyl side group. The polypeptide is Protoheme IX farnesyltransferase (Legionella pneumophila (strain Lens)).